Here is a 585-residue protein sequence, read N- to C-terminus: Arginine--tRNA ligase (585 aa).

Positions 131–141 match the 'HIGH' region motif; sequence ANPTGPMHVGH.

Belongs to the class-I aminoacyl-tRNA synthetase family. In terms of assembly, monomer.

It localises to the cytoplasm. The catalysed reaction is tRNA(Arg) + L-arginine + ATP = L-arginyl-tRNA(Arg) + AMP + diphosphate. The protein is Arginine--tRNA ligase of Brucella ovis (strain ATCC 25840 / 63/290 / NCTC 10512).